The following is a 290-amino-acid chain: Protein EURL homolog (290 aa).

The segment at 185–206 is disordered; that stretch reads SHSQAQKTEETSSGPEGTIQTQ. Positions 228-251 form a coiled coil; the sequence is AKLQQRIQEVFEELTHQVQEKDSL.

The protein belongs to the EURL family. Interacts with CCDC85B. As to expression, expressed in brain (at protein level). Expressed in neural progenitor cells and postmitotic neurons of the embryonic cerebral cortex.

Functionally, plays a role in cortical progenitor cell proliferation and differentiation. Promotes dendritic spine development of post-migratory cortical projection neurons by modulating the beta-catenin signaling pathway. The protein is Protein EURL homolog of Mus musculus (Mouse).